A 93-amino-acid chain; its full sequence is PqqA binding protein (93 aa).

Belongs to the PqqD family. In terms of assembly, monomer. Interacts with PqqE.

It participates in cofactor biosynthesis; pyrroloquinoline quinone biosynthesis. In terms of biological role, functions as a PqqA binding protein and presents PqqA to PqqE, in the pyrroloquinoline quinone (PQQ) biosynthetic pathway. The protein is PqqA binding protein of Methylococcus capsulatus (strain ATCC 33009 / NCIMB 11132 / Bath).